Here is a 474-residue protein sequence, read N- to C-terminus: Trehalose-6-phosphate synthase (474 aa).

D-glucose 6-phosphate is bound at residue Arg-10. A UDP-alpha-D-glucose-binding site is contributed by 22-23 (GG). Residues Tyr-77 and Asp-131 each contribute to the D-glucose 6-phosphate site. The UDP-alpha-D-glucose site is built by Arg-263 and Lys-268. Arg-301 is a D-glucose 6-phosphate binding site. UDP-alpha-D-glucose-binding positions include Phe-340 and 366-370 (LVAKE).

This sequence belongs to the glycosyltransferase 20 family. Homotetramer.

It carries out the reaction D-glucose 6-phosphate + UDP-alpha-D-glucose = alpha,alpha-trehalose 6-phosphate + UDP + H(+). It functions in the pathway glycan biosynthesis; trehalose biosynthesis. In terms of biological role, probably involved in the osmoprotection via the biosynthesis of trehalose. Catalyzes the transfer of glucose from UDP-alpha-D-glucose (UDP-Glc) to D-glucose 6-phosphate (Glc-6-P) to form trehalose-6-phosphate. Acts with retention of the anomeric configuration of the UDP-sugar donor. In Escherichia coli O9:H4 (strain HS), this protein is Trehalose-6-phosphate synthase.